Consider the following 388-residue polypeptide: Subtilisin-like serine protease AsES (388 aa).

An N-terminal signal peptide occupies residues Met-1 to Gly-15. Residues Ala-16 to Ala-105 constitute a propeptide, removed in mature form. Positions Pro-114–Gly-388 constitute a Peptidase S8 domain. Cys-141 and Cys-230 are disulfide-bonded. Residues Asp-146 and His-176 each act as charge relay system in the active site. N-linked (GlcNAc...) asparagine glycosylation is found at Asn-232 and Asn-237. Cysteines 285 and 357 form a disulfide. Ser-331 (charge relay system) is an active-site residue.

It belongs to the peptidase S8 family.

The protein resides in the secreted. With respect to regulation, the elicitor proteolytic activity is completely inhibited by PMSF. The activity is also significantly reduced by aprotinin (leading to 37% residual activity), by leupeptin (leading to 54% residual activity), by the ovomucoid trypsin inhibitor (leading to 65% residual activity), and by p-aminobenzamidine (leading to 26% residual activity). Functionally, extracellular elicitor protein that induces a strong defense response in strawberry and confers both local and systemic plant resistance against the fungal pathogen Colletotricum acutatum, the casual agent of anthracnose disease. AsES activates a cascade of defense responses, including calcium influx, oxidative burst, hypersensitive cell-death response (HR), accumulation of autofluorescent compounds, cell-wall reinforcement with callose and lignin deposition, salicylic acid accumulation, and expression of defense-related genes, such as PR1, PG1, MYB30, RBOH-D, RBOH-F, CHI23, and FLS. The oxidative burst consists in a progressive extracellular accumulation of H(2)O(2) that starts immediately after the contact with AsES and is preceded by a rapid and transient cell membrane depolarization. During this phase takes place also a rapid intracellular accumulation of NO at the chloroplasts. After the first extracellular H(2)O(2) production phase, two intracellular H(2)O(2) accumulation events occur, the first 2 hours after induction, and the second 7 hours after induction. AsES also produces a transient increase of ion leakage, and a progressive alkalinization of the extracellular medium. Confers also local and systemic plant resistance against Botrytis cinerea in Arabidopsis thaliana. Systemic, but not local resistance is dependent on the length of exposure to AsES. The protection to B.cinerea is due to the induction of the plant defenses via the salicylic acid, jasmonic acid and ethylene signaling pathways. Exhibits subtilisin-like proteolytic activity which is necessary but not sufficient for its elicitor function in strawberry plants. Probably induces defense by means of proteolysis of one or multiple host proteins that are specific targets of this protease. This chain is Subtilisin-like serine protease AsES, found in Sarocladium strictum (Black bundle disease fungus).